The primary structure comprises 308 residues: Ankyrin repeat and SOCS box protein 12 (308 aa).

5 ANK repeats span residues 63-92 (IPGT…DVDS), 96-125 (KAQT…CPSG), 129-158 (NNCS…EANV), 171-200 (SCSG…DPDY), and 213-243 (QPRT…NIYL). Positions 268-308 (PRSLLSQTRLVIRRSLCRANQSQATDQLDIPPVLISYLKHQ) constitute an SOCS box domain.

It belongs to the ankyrin SOCS box (ASB) family. As to quaternary structure, interacts with CUL5 and RNF7.

It functions in the pathway protein modification; protein ubiquitination. Functionally, probable substrate-recognition component of a SCF-like ECS (Elongin-Cullin-SOCS-box protein) E3 ubiquitin-protein ligase complex which mediates the ubiquitination and subsequent proteasomal degradation of target proteins. This Mus musculus (Mouse) protein is Ankyrin repeat and SOCS box protein 12 (Asb12).